Here is a 156-residue protein sequence, read N- to C-terminus: Regulatory protein RecX (156 aa).

This sequence belongs to the RecX family.

The protein localises to the cytoplasm. In terms of biological role, modulates RecA activity. The polypeptide is Regulatory protein RecX (Pseudomonas putida (strain W619)).